A 428-amino-acid chain; its full sequence is Glutamate-1-semialdehyde 2,1-aminomutase (428 aa).

Lysine 267 is modified (N6-(pyridoxal phosphate)lysine).

The protein belongs to the class-III pyridoxal-phosphate-dependent aminotransferase family. HemL subfamily. In terms of assembly, homodimer. The cofactor is pyridoxal 5'-phosphate.

The protein resides in the cytoplasm. The enzyme catalyses (S)-4-amino-5-oxopentanoate = 5-aminolevulinate. It functions in the pathway porphyrin-containing compound metabolism; protoporphyrin-IX biosynthesis; 5-aminolevulinate from L-glutamyl-tRNA(Glu): step 2/2. Its pathway is porphyrin-containing compound metabolism; chlorophyll biosynthesis. The protein is Glutamate-1-semialdehyde 2,1-aminomutase of Prochlorococcus marinus (strain MIT 9303).